Here is a 352-residue protein sequence, read N- to C-terminus: uncharacterized protein (352 aa).

The disordered stretch occupies residues 1–40; sequence MTSTMKLFTDHAEISVRERPPQRNNNNQEQDNSNRPAPRR. Over residues 8–21 the composition is skewed to basic and acidic residues; that stretch reads FTDHAEISVRERPP. The segment covering 22-36 has biased composition (low complexity); it reads QRNNNNQEQDNSNRP. A helical transmembrane segment spans residues 317-333; it reads MTITLPCGLTIAFFVYY.

The protein resides in the host cell membrane. This is an uncharacterized protein from Diadromus pulchellus idnoreovirus 1 (DpIRV-1).